We begin with the raw amino-acid sequence, 210 residues long: Thymidylate kinase (210 aa).

ATP is bound at residue 11 to 18 (GLEGAGKS).

This sequence belongs to the thymidylate kinase family.

It catalyses the reaction dTMP + ATP = dTDP + ADP. In terms of biological role, phosphorylation of dTMP to form dTDP in both de novo and salvage pathways of dTTP synthesis. The protein is Thymidylate kinase of Histophilus somni (strain 2336) (Haemophilus somnus).